The chain runs to 236 residues: V-set and transmembrane domain-containing protein 1 (236 aa).

An N-terminal signal peptide occupies residues 1-16 (MTAEFLSLLCLGLCLG). Residues 17 to 135 (YEDEKKNEKP…APSMKTDTRT (119 aa)) are Extracellular-facing. The 88-residue stretch at 27 to 114 (PKPSLHAWPS…EWSESSEHLQ (88 aa)) folds into the Ig-like V-type domain. 2 N-linked (GlcNAc...) asparagine glycosylation sites follow: Asn44 and Asn55. Cys49 and Cys96 form a disulfide bridge. A helical transmembrane segment spans residues 136–156 (IFVAIFSCISILLLFLSVFII). Topologically, residues 157 to 236 (YRCSQHSSSS…GSHEYAALKV (80 aa)) are cytoplasmic. The disordered stretch occupies residues 166–200 (SEESTKRTSHSKLPEQEAAEADLSNMERVSLSTAD). 2 consecutive short sequence motifs (ITIM motif) follow at residues 204-209 (VTYAEL) and 229-234 (HEYAAL). Residues 215–236 (SEAASDTTQEPPGSHEYAALKV) are disordered.

In terms of processing, isoform 2 is N-glycosylated. In terms of tissue distribution, expressed on myeloid (neutrophils, eosinophils and monocytes) but not on lymphoid cells.

The protein resides in the membrane. It is found in the secreted. Functionally, behaves as a cytokine, promoting IL17A secretion by CD4+ T-cells, and differentiation and activation of IL17 producing helper T-cells (TH17). In terms of biological role, inhibitory immune receptor involved in the regulation of phagocytes. This chain is V-set and transmembrane domain-containing protein 1 (VSTM1), found in Homo sapiens (Human).